Here is an 868-residue protein sequence, read N- to C-terminus: Facilitated trehalose transporter Tret1 (868 aa).

Disordered regions lie at residues 1–213 (MSGR…QKAT) and 257–314 (KESS…LIHR). The Cytoplasmic segment spans residues 1 to 403 (MSGRDNRGAG…VYRPTTNPIY (403 aa)). Over residues 25–43 (KLKEKLTRAGDDQGYHRVE) the composition is skewed to basic and acidic residues. 3 stretches are compositionally biased toward low complexity: residues 44–57 (SNLSTSNTATSLDT), 79–91 (PQQQQQQQRQQLR), and 117–126 (PFQQQQQRTP). 2 stretches are compositionally biased toward basic and acidic residues: residues 146-155 (EIREHRDRQQ) and 257-290 (KESSSEEEFHKTRREFQGRKHQSLDPRVTFKLDK). Phosphoserine occurs at positions 259, 260, 261, 331, and 333. Residues 335 to 367 (EDFHTSRQHFQQQRSISTDSRKSRRPYEMDEMG) form a disordered region. Residues 342–352 (QHFQQQRSIST) are compositionally biased toward polar residues. Residues 353–367 (DSRKSRRPYEMDEMG) show a composition bias toward basic and acidic residues. A helical membrane pass occupies residues 404-424 (IWTQVLAALSVSLGSLVVGFV). Residues 425–451 (SAYTSPALVSMTNRNMTSFEVTPQAAS) are Extracellular-facing. N-linked (GlcNAc...) asparagine glycosylation is present at N439. A helical membrane pass occupies residues 452–472 (WVGGIMPLAGLAGGIAGGPFI). Over 473–484 (EYLGRRNTILAT) the chain is Cytoplasmic. The chain crosses the membrane as a helical span at residues 485-505 (AIPFIVSSLLIACAVNVAMVL). The Extracellular segment spans residues 506–508 (AGR). The helical transmembrane segment at 509–529 (FLAGFCVGIASLSLPVYLGET) threads the bilayer. The Cytoplasmic portion of the chain corresponds to 530–535 (VQPEVR). Residues 536-556 (GTLGLLPTAFGNIGILLCFVA) traverse the membrane as a helical segment. Over 557 to 563 (GTYMDWS) the chain is Extracellular. A helical membrane pass occupies residues 564 to 584 (MLAFLGAALPVPFLILMFLIP). Over 585-653 (ETPRWFVSRG…NLKPLSISLG (69 aa)) the chain is Cytoplasmic. Residues 654 to 674 (LMFFQQLSGINAVIFYTVSIF) form a helical membrane-spanning segment. At 675–684 (KDAGSTIDGN) the chain is on the extracellular side. The chain crosses the membrane as a helical span at residues 685 to 705 (LCTIIVGIVNFMATFIATLLI). At 706–711 (DRAGRK) the chain is on the cytoplasmic side. A helical membrane pass occupies residues 712–732 (ILLYVSNIAMIITLFVLGGFF). Residues 733–751 (YCKSHGQDVSQLGWLPLSC) are Extracellular-facing. Residues 752–772 (FVIYILGFSLGFGPIPWLMMG) form a helical membrane-spanning segment. The Cytoplasmic portion of the chain corresponds to 773-778 (EILPSK). The chain crosses the membrane as a helical span at residues 779 to 799 (IRGSAASVATAFNWSCTFVVT). The Extracellular segment spans residues 800–812 (KTFQDMIDFMGAH). Residues 813-833 (GAFWLFGSICFIGLFFVILYV) traverse the membrane as a helical segment. Over 834 to 868 (PETQGKTLEDIERKMMGRVRRMSSVANMKPLAFNM) the chain is Cytoplasmic. Phosphoserine is present on residues S856 and S857.

Belongs to the major facilitator superfamily. Sugar transporter (TC 2.A.1.1) family. Trehalose transporter subfamily.

The protein localises to the cell membrane. In terms of biological role, low-capacity facilitative transporter for trehalose. Does not transport maltose, sucrose or lactose. Mediates the bidirectional transfer of trehalose. Responsible for the transport of trehalose synthesized in the fat body and the incorporation of trehalose into other tissues that require a carbon source, thereby regulating trehalose levels in the hemolymph. This Drosophila pseudoobscura pseudoobscura (Fruit fly) protein is Facilitated trehalose transporter Tret1.